Reading from the N-terminus, the 213-residue chain is Orotate phosphoribosyltransferase (213 aa).

Residue K26 coordinates 5-phospho-alpha-D-ribose 1-diphosphate. Position 34 to 35 (34 to 35) interacts with orotate; sequence FF. Residues 72-73, R99, K100, K103, H105, and 124-132 contribute to the 5-phospho-alpha-D-ribose 1-diphosphate site; these read YK and DDVITAGTA. Orotate-binding residues include T128 and R156.

This sequence belongs to the purine/pyrimidine phosphoribosyltransferase family. PyrE subfamily. In terms of assembly, homodimer. Mg(2+) is required as a cofactor.

It carries out the reaction orotidine 5'-phosphate + diphosphate = orotate + 5-phospho-alpha-D-ribose 1-diphosphate. The protein operates within pyrimidine metabolism; UMP biosynthesis via de novo pathway; UMP from orotate: step 1/2. Catalyzes the transfer of a ribosyl phosphate group from 5-phosphoribose 1-diphosphate to orotate, leading to the formation of orotidine monophosphate (OMP). The chain is Orotate phosphoribosyltransferase from Vibrio vulnificus (strain YJ016).